The primary structure comprises 253 residues: Ribosome maturation protein SBDS (253 aa).

This sequence belongs to the SDO1/SBDS family. In terms of assembly, associates with the 60S ribosomal subunit.

Its subcellular location is the cytoplasm. The protein resides in the nucleus. The protein localises to the nucleolus. It is found in the nucleoplasm. It localises to the cytoskeleton. Its subcellular location is the spindle. In terms of biological role, required for the assembly of mature ribosomes and ribosome biogenesis. Together with K10C3.5b/EFL1, triggers the GTP-dependent release of ribosome maturation factors from 60S pre-ribosomes in the cytoplasm, thereby activating ribosomes for translation competence by allowing 80S ribosome assembly. Required for normal levels of protein synthesis. May play a role in cellular stress resistance. May play a role in cellular response to DNA damage. May play a role in cell proliferation. In Caenorhabditis elegans, this protein is Ribosome maturation protein SBDS (sbds-1).